A 268-amino-acid polypeptide reads, in one-letter code: Secreted RxLR effector protein 32 (268 aa).

Positions M1 to A21 are cleaved as a signal peptide. The RxLR-dEER signature appears at R50–R71. The tract at residues P120–G257 is disordered. Low complexity predominate over residues S148 to K161. Residues N212–I224 are compositionally biased toward basic and acidic residues.

This sequence belongs to the RxLR effector family.

Its subcellular location is the secreted. The protein localises to the host cell. Secreted effector that completely suppresses the host cell death induced by cell death-inducing proteins. The sequence is that of Secreted RxLR effector protein 32 from Plasmopara viticola (Downy mildew of grapevine).